Consider the following 367-residue polypeptide: 4-hydroxy-3-methylbut-2-en-1-yl diphosphate synthase (flavodoxin) (367 aa).

Positions 268, 271, 303, and 310 each coordinate [4Fe-4S] cluster.

The protein belongs to the IspG family. The cofactor is [4Fe-4S] cluster.

It catalyses the reaction (2E)-4-hydroxy-3-methylbut-2-enyl diphosphate + oxidized [flavodoxin] + H2O + 2 H(+) = 2-C-methyl-D-erythritol 2,4-cyclic diphosphate + reduced [flavodoxin]. It functions in the pathway isoprenoid biosynthesis; isopentenyl diphosphate biosynthesis via DXP pathway; isopentenyl diphosphate from 1-deoxy-D-xylulose 5-phosphate: step 5/6. In terms of biological role, converts 2C-methyl-D-erythritol 2,4-cyclodiphosphate (ME-2,4cPP) into 1-hydroxy-2-methyl-2-(E)-butenyl 4-diphosphate. This Halalkalibacterium halodurans (strain ATCC BAA-125 / DSM 18197 / FERM 7344 / JCM 9153 / C-125) (Bacillus halodurans) protein is 4-hydroxy-3-methylbut-2-en-1-yl diphosphate synthase (flavodoxin).